The primary structure comprises 137 residues: Peptide methionine sulfoxide reductase MsrB (137 aa).

The 123-residue stretch at 7 to 129 folds into the MsrB domain; the sequence is AEELKKKLSE…NSASLAFSDE (123 aa). Residues cysteine 46, cysteine 49, cysteine 95, and cysteine 98 each coordinate Zn(2+). The Nucleophile role is filled by cysteine 118.

The protein belongs to the MsrB Met sulfoxide reductase family. It depends on Zn(2+) as a cofactor.

The enzyme catalyses L-methionyl-[protein] + [thioredoxin]-disulfide + H2O = L-methionyl-(R)-S-oxide-[protein] + [thioredoxin]-dithiol. This Salmonella arizonae (strain ATCC BAA-731 / CDC346-86 / RSK2980) protein is Peptide methionine sulfoxide reductase MsrB.